The chain runs to 52 residues: Eukaryotic translation initiation factor 2 subunit 1 (52 aa).

Positions 16-52 (EDVVMVNVRSIAEMGAYVSLLEYNNIEGRILLSELSR) constitute an S1 motif domain. S48 is modified (phosphoserine; by HRI). Phosphoserine is present on S51.

Belongs to the eIF-2-alpha family. As to quaternary structure, eukaryotic translation initiation factor 2 eIF2 is a heterotrimeric complex composed of an alpha (EIF2S1), a beta (EIF2S2) and a gamma (EIF2S3) chain. eIF2 is member of the 43S pre-initiation complex (43S PIC). eIF2 forms a complex with at least CELF1/CUGBP1, CALR, CALR3, EIF2S1, EIF2S2, HSP90B1 and HSPA5. Interaction with METAP2 protects EIF2S1 from inhibitory phosphorylation. Interacts with ABCF1. Associates with ribosomes. Interacts with DDX3X in an RNA-independent manner. Phosphorylation at Ser-48 and Ser-51 stabilizes the eIF-2/GDP/eIF2B complex and prevents GDP/GTP exchange reaction, thus impairing the recycling of eIF-2 between successive rounds of initiation and leading to global inhibition of translation, while concomitantly initiating the preferential translation of integrated stress response (ISR)-specific mRNAs. Substrate for at least 4 kinases: EIF2AK1/HRI, EIF2AK2/PKR, EIF2AK3/PERK and EIF2AK4/GCN2. Phosphorylation on Ser-51 by the EIF2AK4/GCN2 protein kinase occurs in response to amino acid starvation and UV irradiation. Phosphorylation at Ser-51 by the EIF2AK3/PERK protein kinase occurs in response to the unfolded protein response. Phosphorylation at Ser-51 by EIF2AK1/HRI in response to mitochondrial damage promotes relocalization to the mitochondrial surface.

It is found in the cytoplasm. It localises to the stress granule. The protein localises to the cytosol. The protein resides in the mitochondrion. With respect to regulation, activity is regulated by phosphorylation at Ser-49 and Ser-52, which stabilizes the eIF2/GDP/eIF2B complex and prevents the eIF2B-mediated exchange of GDP for GTP, thereby preventing the formation of the 43S pre-initiation complex (43S PIC). This results in the global attenuation of 5' cap-dependent protein synthesis and concomitant translation of ISR-specific mRNAs that contain a short upstream open reading frame (uORF) in their 5' UTR, such as ATF4, ATF5, DDIT3/CHOP and PPP1R15A/GADD34. Member of the eIF2 complex that functions in the early steps of protein synthesis by forming a ternary complex with GTP and initiator tRNA. This complex binds to a 40S ribosomal subunit, followed by mRNA binding to form a 43S pre-initiation complex. Junction of the 60S ribosomal subunit to form the 80S initiation complex is preceded by hydrolysis of the GTP bound to eIF2 and release of an eIF2-GDP binary complex. In order for eIF2 to recycle and catalyze another round of initiation, the GDP bound to eIF2 must exchange with GTP by way of a reaction catalyzed by eIF2B. EIF2S1/eIF2-alpha is a key component of the integrated stress response (ISR), required for adaptation to various stress: phosphorylation by metabolic-stress sensing protein kinases (EIF2AK1/HRI, EIF2AK2/PKR, EIF2AK3/PERK and EIF2AK4/GCN2) in response to stress converts EIF2S1/eIF2-alpha in a global protein synthesis inhibitor, leading to a attenuation of cap-dependent translation, while concomitantly initiating the preferential translation of ISR-specific mRNAs, such as the transcriptional activators ATF4 and QRICH1, and hence allowing ATF4- and QRICH1-mediated reprogramming. EIF2S1/eIF2-alpha also acts as an activator of mitophagy in response to mitochondrial damage: phosphorylation by EIF2AK1/HRI promotes relocalization to the mitochondrial surface, thereby triggering PRKN-independent mitophagy. The protein is Eukaryotic translation initiation factor 2 subunit 1 (EIF2S1) of Oryctolagus cuniculus (Rabbit).